A 223-amino-acid chain; its full sequence is DNA-directed RNA polymerase III subunit RPC7 (223 aa).

A compositionally biased stretch (basic and acidic residues) spans 111–124 (MMPRKKCKKGDPKS). The interval 111–223 (MMPRKKCKKG…SDDNMDEATY (113 aa)) is disordered. Thr134 is modified (phosphothreonine). Residues 144–156 (KTIEELEKRGEGE) show a composition bias toward basic and acidic residues. Ser158 bears the Phosphoserine mark. Composition is skewed to acidic residues over residues 173–198 (KDDEEDGEEDAEQEDYDEEEQEEEND) and 206–223 (NGDDFGVDSDDNMDEATY).

It belongs to the eukaryotic RPC7 RNA polymerase subunit family. Component of the RNA polymerase III complex consisting of 17 subunits: a ten-subunit horseshoe-shaped catalytic core composed of POLR3A/RPC1, POLR3B/RPC2, POLR1C/RPAC1, POLR1D/RPAC2, POLR3K/RPC10, POLR2E/RPABC1, POLR2F/RPABC2, POLR2H/RPABC3, POLR2K/RPABC4 and POLR2L/RPABC5; a mobile stalk composed of two subunits POLR3H/RPC8 and CRCP/RPC9, protruding from the core and functioning primarily in transcription initiation; and additional subunits homologous to general transcription factors of the RNA polymerase II machinery, POLR3C/RPC3-POLR3F/RPC6-POLR3G/RPC7 heterotrimer required for transcription initiation and POLR3D/RPC4-POLR3E/RPC5 heterodimer involved in both transcription initiation and termination. Directly interacts with POLR3C/RPC62. Also found in a trimeric complex with POLR3C/RPC3 and POLR3GL. As to expression, expressed at low levels in the liver.

Its subcellular location is the nucleus. It is found in the cytoplasm. Functionally, DNA-dependent RNA polymerase catalyzes the transcription of DNA into RNA using the four ribonucleoside triphosphates as substrates. Specific peripheric component of RNA polymerase III (Pol III) which synthesizes small non-coding RNAs including 5S rRNA, snRNAs, tRNAs and miRNAs from at least 500 distinct genomic loci. Acts as a long tether that bridges POLR3C/RPC3-POLR3F/RPC6-POLR3G/RPC7 heterotrimer and the mobile stalk of Pol III, coordinating the dynamics of Pol III stalk and clamp modules during the transition from apo to elongation state. Pol III exists as two alternative complexes defined by the mutually exclusive incorporation of subunit POLR3G/RPC7alpha or POLR3GL/RPC7beta. POLR3G/RPC7alpha modulates Pol III transcriptome by specifically enhancing the transcription of snaR-A non-coding RNAs. At resting state, occupies the active site of apo Pol III and keeps Pol III in an autoinhibitory mode, preventing non-specific transcription. Pol III plays a key role in sensing and limiting infection by intracellular bacteria and DNA viruses. Acts as a nuclear and cytosolic DNA sensor involved in innate immune response. Can sense non-self dsDNA that serves as template for transcription into dsRNA. The non-self RNA polymerase III transcripts, such as Epstein-Barr virus-encoded RNAs (EBERs), induce type I interferon and NF-kappa-B through the RIG-I pathway. In Mus musculus (Mouse), this protein is DNA-directed RNA polymerase III subunit RPC7 (Polr3g).